The primary structure comprises 158 residues: MRCPFCGSDDTQVKDSRPAEDNSAIRRRRICPDCGGRFTTFERVQLRELTVLKKTGRKAPFDRNKLVRSFEIALRKRPVDRDRIERAVSGIVRRLESSGETEISSEQIGLQVLEALKSLDDVAFVRYASVYRDFSHAEDFEQVISEITAKISQDHEPG.

Residues 1 to 22 form a disordered region; sequence MRCPFCGSDDTQVKDSRPAEDN. The segment at 3-34 is a zinc-finger region; sequence CPFCGSDDTQVKDSRPAEDNSAIRRRRICPDC. The segment covering 11–22 has biased composition (basic and acidic residues); that stretch reads TQVKDSRPAEDN. Positions 49–139 constitute an ATP-cone domain; the sequence is LTVLKKTGRK…VYRDFSHAED (91 aa).

This sequence belongs to the NrdR family. Requires Zn(2+) as cofactor.

Functionally, negatively regulates transcription of bacterial ribonucleotide reductase nrd genes and operons by binding to NrdR-boxes. The sequence is that of Transcriptional repressor NrdR from Allorhizobium ampelinum (strain ATCC BAA-846 / DSM 112012 / S4) (Agrobacterium vitis (strain S4)).